Reading from the N-terminus, the 464-residue chain is GPI mannosyltransferase 2 (464 aa).

The Cytoplasmic portion of the chain corresponds to methionine 1–lysine 70. Residues glycine 71–methionine 91 form a helical membrane-spanning segment. Topologically, residues serine 92 to aspartate 166 are lumenal. Asparagine 108 and asparagine 139 each carry an N-linked (GlcNAc...) asparagine glycan. A helical membrane pass occupies residues valine 167 to tyrosine 187. The Cytoplasmic segment spans residues alanine 188–methionine 219. A helical transmembrane segment spans residues serine 220 to isoleucine 240. Topologically, residues lysine 241–asparagine 260 are lumenal. Residues glycine 261–glutamate 281 form a helical membrane-spanning segment. Topologically, residues arginine 282 to glutamine 289 are cytoplasmic. Residues valine 290–tyrosine 309 form a helical membrane-spanning segment. Residues asparagine 310–asparagine 356 are Lumenal-facing. An N-linked (GlcNAc...) asparagine glycan is attached at asparagine 326. The chain crosses the membrane as a helical span at residues phenylalanine 357–glycine 377. The Cytoplasmic segment spans residues serine 378 to serine 388. Residues histidine 389 to leucine 409 form a helical membrane-spanning segment. Topologically, residues asparagine 410–histidine 440 are lumenal. The helical transmembrane segment at cysteine 441 to leucine 461 threads the bilayer. Residues proline 462–alanine 464 are Cytoplasmic-facing.

Belongs to the PIGV family. Part of the GPI mannosyltransferase 2 complex composed of gpi18 and C167.09.

Its subcellular location is the endoplasmic reticulum membrane. The protein operates within glycolipid biosynthesis; glycosylphosphatidylinositol-anchor biosynthesis. In terms of biological role, mannosyltransferase involved in glycosylphosphatidylinositol-anchor biosynthesis. Responsible for the transfer of the second mannose to the glycosylphosphatidylinositol during GPI precursor assembly. The polypeptide is GPI mannosyltransferase 2 (gpi18) (Schizosaccharomyces pombe (strain 972 / ATCC 24843) (Fission yeast)).